Reading from the N-terminus, the 386-residue chain is ATP phosphoribosyltransferase regulatory subunit (386 aa).

The protein belongs to the class-II aminoacyl-tRNA synthetase family. HisZ subfamily. In terms of assembly, heteromultimer composed of HisG and HisZ subunits.

Its subcellular location is the cytoplasm. It participates in amino-acid biosynthesis; L-histidine biosynthesis; L-histidine from 5-phospho-alpha-D-ribose 1-diphosphate: step 1/9. Its function is as follows. Required for the first step of histidine biosynthesis. May allow the feedback regulation of ATP phosphoribosyltransferase activity by histidine. In Ralstonia nicotianae (strain ATCC BAA-1114 / GMI1000) (Ralstonia solanacearum), this protein is ATP phosphoribosyltransferase regulatory subunit.